A 467-amino-acid polypeptide reads, in one-letter code: Cell division protein FtsP (467 aa).

A signal peptide (tat-type signal) is located at residues 1–28 (MRSLTRRDFLKSGILASSLSCIPQSVMA).

This sequence belongs to the FtsP family. Post-translationally, predicted to be exported by the Tat system. The position of the signal peptide cleavage has not been experimentally proven.

Its subcellular location is the periplasm. Functionally, cell division protein that is required for growth during stress conditions. May be involved in protecting or stabilizing the divisomal assembly under conditions of stress. The chain is Cell division protein FtsP from Histophilus somni (strain 2336) (Haemophilus somnus).